Here is a 133-residue protein sequence, read N- to C-terminus: Small ribosomal subunit protein uS8 (133 aa).

The protein belongs to the universal ribosomal protein uS8 family. In terms of assembly, part of the 30S ribosomal subunit. Contacts proteins S5 and S12.

Its function is as follows. One of the primary rRNA binding proteins, it binds directly to 16S rRNA central domain where it helps coordinate assembly of the platform of the 30S subunit. The chain is Small ribosomal subunit protein uS8 from Gloeothece citriformis (strain PCC 7424) (Cyanothece sp. (strain PCC 7424)).